Reading from the N-terminus, the 163-residue chain is Lipoprotein signal peptidase (163 aa).

Helical transmembrane passes span A9–L29, I42–G62, W67–L87, and S93–I113. Active-site residues include D123 and D141. Residues F137–L157 traverse the membrane as a helical segment.

This sequence belongs to the peptidase A8 family.

It localises to the cell inner membrane. The enzyme catalyses Release of signal peptides from bacterial membrane prolipoproteins. Hydrolyzes -Xaa-Yaa-Zaa-|-(S,diacylglyceryl)Cys-, in which Xaa is hydrophobic (preferably Leu), and Yaa (Ala or Ser) and Zaa (Gly or Ala) have small, neutral side chains.. The protein operates within protein modification; lipoprotein biosynthesis (signal peptide cleavage). Functionally, this protein specifically catalyzes the removal of signal peptides from prolipoproteins. This is Lipoprotein signal peptidase from Coxiella burnetii (strain Dugway 5J108-111).